Consider the following 150-residue polypeptide: Putative pre-16S rRNA nuclease (150 aa).

This sequence belongs to the YqgF nuclease family.

Its subcellular location is the cytoplasm. In terms of biological role, could be a nuclease involved in processing of the 5'-end of pre-16S rRNA. This is Putative pre-16S rRNA nuclease from Syntrophus aciditrophicus (strain SB).